The sequence spans 247 residues: UPF0280 protein MmarC6_1437 (247 aa).

This sequence belongs to the UPF0280 family.

This Methanococcus maripaludis (strain C6 / ATCC BAA-1332) protein is UPF0280 protein MmarC6_1437.